Here is a 346-residue protein sequence, read N- to C-terminus: Porin Omp2a (346 aa).

A signal peptide spans 1-22 (MNIKSLLLGSAAALVAASGAQA).

Belongs to the alphaproteobacteria porin family. In terms of assembly, monomer.

The protein resides in the cell outer membrane. Forms passive diffusion pores that allow small molecular weight hydrophilic materials across the outer membrane. In Brucella ovis, this protein is Porin Omp2a (omp2a).